Here is a 139-residue protein sequence, read N- to C-terminus: Transcription antitermination protein NusB (139 aa).

It belongs to the NusB family.

In terms of biological role, involved in transcription antitermination. Required for transcription of ribosomal RNA (rRNA) genes. Binds specifically to the boxA antiterminator sequence of the ribosomal RNA (rrn) operons. The protein is Transcription antitermination protein NusB of Pectobacterium carotovorum subsp. carotovorum (strain PC1).